Consider the following 174-residue polypeptide: Large ribosomal subunit protein uL10 (174 aa).

Belongs to the universal ribosomal protein uL10 family. Part of the ribosomal stalk of the 50S ribosomal subunit. The N-terminus interacts with L11 and the large rRNA to form the base of the stalk. The C-terminus forms an elongated spine to which L12 dimers bind in a sequential fashion forming a multimeric L10(L12)X complex.

Forms part of the ribosomal stalk, playing a central role in the interaction of the ribosome with GTP-bound translation factors. The protein is Large ribosomal subunit protein uL10 of Verminephrobacter eiseniae (strain EF01-2).